Here is a 467-residue protein sequence, read N- to C-terminus: MSIGTIVQCIGAVVDIQFPRDAMPKVYDALVLQDSGEASFAEKGLSFEVQQQLGDGVVRTIALGSSDGLRRGMPVSNTGAPISVPVGHGTLGRIMDVLGRPIDEAGPIAADEKRAIHQKAPKFDELSPSVDLLETGIKVIDLVCPFAKGGKVGLFGGAGVGKTVNMMELINNIAKQHSGLSVFAGVGERTREGNDFYHEMKDSNVLDKVAMVFGQMNEPPGNRLRVALTGLTMAERFRDEGRDILFFVDNIYRYTLAGTEVSALLGRMPSAVGYQPTLAEEMGKLQERITSTKTGSITSIQAVYVPADDLTDPSPATTFLHLDSTVVLSRDIAALGIYPAVDPLDSTSRQLDPQIVGTEHYEVARRVQQTLQRYKELRDIIAILGMDELSPEDKLAVGRARKIQRFLSQPFHVAEVFTGSPGKYVPLKETIRGFKMLVDGECDHLPEQAFYMVGSIDEAFEKAKKLQ.

Position 156 to 163 (Gly156 to Thr163) interacts with ATP.

It belongs to the ATPase alpha/beta chains family. In terms of assembly, F-type ATPases have 2 components, CF(1) - the catalytic core - and CF(0) - the membrane proton channel. CF(1) has five subunits: alpha(3), beta(3), gamma(1), delta(1), epsilon(1). CF(0) has three main subunits: a(1), b(2) and c(9-12). The alpha and beta chains form an alternating ring which encloses part of the gamma chain. CF(1) is attached to CF(0) by a central stalk formed by the gamma and epsilon chains, while a peripheral stalk is formed by the delta and b chains.

It localises to the cell inner membrane. The enzyme catalyses ATP + H2O + 4 H(+)(in) = ADP + phosphate + 5 H(+)(out). In terms of biological role, produces ATP from ADP in the presence of a proton gradient across the membrane. The catalytic sites are hosted primarily by the beta subunits. This is ATP synthase subunit beta from Ralstonia nicotianae (strain ATCC BAA-1114 / GMI1000) (Ralstonia solanacearum).